The chain runs to 194 residues: Cation channel sperm-associated auxiliary subunit zeta (194 aa).

Component of the CatSper complex or CatSpermasome composed of the core pore-forming members CATSPER1, CATSPER2, CATSPER3 and CATSPER4 as well as auxiliary members CATSPERB, CATSPERG2, CATSPERD, CATSPERE, CATSPERZ, C2CD6/CATSPERT, SLCO6C1, TMEM249, TMEM262 and EFCAB9. HSPA1 may be an additional auxiliary complex member. The core complex members CATSPER1, CATSPER2, CATSPER3 and CATSPER4 form a heterotetrameric channel. The auxiliary CATSPERB, CATSPERG2, CATSPERD and CATSPERE subunits form a pavilion-like structure over the pore which stabilizes the complex through interactions with CATSPER4, CATSPER3, CATSPER1 and CATSPER2 respectively. SLCO6C1 interacts with CATSPERE and TMEM262/CATSPERH interacts with CATSPERB, further stabilizing the complex. C2CD6/CATSPERT interacts at least with CATSPERD and is required for targeting the CatSper complex in the flagellar membrane. Interacts with EFCAB9; the interaction is direct, Ca(2+)-dependent and connects EFCAB9 with the CatSper complex. Dissociates from EFCAB9 at elevated pH. In terms of tissue distribution, testis-specific. Expressed in adult but not in fetal testis. Not expressed in ovary. Within testis, expression is restricted to spermatids.

The protein localises to the cell projection. The protein resides in the cilium. It localises to the flagellum membrane. Its function is as follows. Auxiliary component of the CatSper complex, a complex involved in sperm cell hyperactivation. Sperm cell hyperactivation is needed for sperm motility which is essential late in the preparation of sperm for fertilization. Required for a distribution of the CatSper complex in linear quadrilateral nanodomains along the flagellum, maximizing fertilization inside the mammalian female reproductive tract. Together with EFCAB9, associates with the CatSper channel pore and is required for the two-row structure of each single CatSper channel. The sequence is that of Cation channel sperm-associated auxiliary subunit zeta from Mus musculus (Mouse).